We begin with the raw amino-acid sequence, 316 residues long: Tetrahydromethanopterin S-methyltransferase subunit H (316 aa).

It belongs to the MtrH family. The complex is composed of 8 subunits; MtrA, MtrB, MtrC, MtrD, MtrE, MtrF, MtrG and MtrH.

It catalyses the reaction 5-methyl-5,6,7,8-tetrahydromethanopterin + coenzyme M + 2 Na(+)(in) = 5,6,7,8-tetrahydromethanopterin + methyl-coenzyme M + 2 Na(+)(out). Its pathway is one-carbon metabolism; methanogenesis from CO(2); methyl-coenzyme M from 5,10-methylene-5,6,7,8-tetrahydromethanopterin: step 2/2. Its function is as follows. Part of a complex that catalyzes the formation of methyl-coenzyme M and tetrahydromethanopterin from coenzyme M and methyl-tetrahydromethanopterin. This is an energy-conserving, sodium-ion translocating step. MtrH catalyzes the transfer of the methyl group from methyl-tetrahydromethanopterin to the corrinoid prosthetic group of MtrA. The polypeptide is Tetrahydromethanopterin S-methyltransferase subunit H (Methanosarcina barkeri (strain Fusaro / DSM 804)).